Reading from the N-terminus, the 457-residue chain is RuvB-like helicase 1 (457 aa).

73–80 (GGPSTGKT) lines the ATP pocket.

Belongs to the RuvB family. As to quaternary structure, may form heterododecamers with RVB2. Component of the SWR1 chromatin remodeling complex, the INO80 chromatin remodeling complex, and of the R2TP complex.

The protein resides in the nucleus. The enzyme catalyses ATP + H2O = ADP + phosphate + H(+). In terms of biological role, DNA helicase which participates in several chromatin remodeling complexes, including the SWR1 and the INO80 complexes. The SWR1 complex mediates the ATP-dependent exchange of histone H2A for the H2A variant HZT1 leading to transcriptional regulation of selected genes by chromatin remodeling. The INO80 complex remodels chromatin by shifting nucleosomes and is involved in DNA repair. Also involved in pre-rRNA processing. The protein is RuvB-like helicase 1 (RVB1) of Candida glabrata (strain ATCC 2001 / BCRC 20586 / JCM 3761 / NBRC 0622 / NRRL Y-65 / CBS 138) (Yeast).